Here is a 487-residue protein sequence, read N- to C-terminus: N-succinylglutamate 5-semialdehyde dehydrogenase (487 aa).

221–226 (GSSDTG) contributes to the NAD(+) binding site. Residues E244 and C278 contribute to the active site.

The protein belongs to the aldehyde dehydrogenase family. AstD subfamily.

The enzyme catalyses N-succinyl-L-glutamate 5-semialdehyde + NAD(+) + H2O = N-succinyl-L-glutamate + NADH + 2 H(+). Its pathway is amino-acid degradation; L-arginine degradation via AST pathway; L-glutamate and succinate from L-arginine: step 4/5. In terms of biological role, catalyzes the NAD-dependent reduction of succinylglutamate semialdehyde into succinylglutamate. This Burkholderia ambifaria (strain ATCC BAA-244 / DSM 16087 / CCUG 44356 / LMG 19182 / AMMD) (Burkholderia cepacia (strain AMMD)) protein is N-succinylglutamate 5-semialdehyde dehydrogenase.